Consider the following 397-residue polypeptide: Succinate--CoA ligase [ADP-forming] subunit beta (397 aa).

The ATP-grasp domain occupies 9-254; sequence KELLRGYGAP…TSEEDEKEIE (246 aa). ATP contacts are provided by residues lysine 46, 53–55, glutamate 109, alanine 112, and glutamate 117; that span reads GRG. Residues asparagine 209 and aspartate 223 each contribute to the Mg(2+) site. Substrate is bound by residues asparagine 274 and 331–333; that span reads GIM.

Belongs to the succinate/malate CoA ligase beta subunit family. In terms of assembly, heterotetramer of two alpha and two beta subunits. Mg(2+) is required as a cofactor.

The enzyme catalyses succinate + ATP + CoA = succinyl-CoA + ADP + phosphate. The catalysed reaction is GTP + succinate + CoA = succinyl-CoA + GDP + phosphate. It participates in carbohydrate metabolism; tricarboxylic acid cycle; succinate from succinyl-CoA (ligase route): step 1/1. Succinyl-CoA synthetase functions in the citric acid cycle (TCA), coupling the hydrolysis of succinyl-CoA to the synthesis of either ATP or GTP and thus represents the only step of substrate-level phosphorylation in the TCA. The beta subunit provides nucleotide specificity of the enzyme and binds the substrate succinate, while the binding sites for coenzyme A and phosphate are found in the alpha subunit. The sequence is that of Succinate--CoA ligase [ADP-forming] subunit beta from Chelativorans sp. (strain BNC1).